Consider the following 95-residue polypeptide: MPASSKSRTSAVPTIEELIQRLEEITRNIENPDTGLENSIALYEEGMSLAEECRKRLLETRKKLETINPAETARPAKPENAPESPRMNDLFGTES.

Residues E65 to S95 are disordered.

The protein belongs to the XseB family. As to quaternary structure, heterooligomer composed of large and small subunits.

The protein localises to the cytoplasm. It catalyses the reaction Exonucleolytic cleavage in either 5'- to 3'- or 3'- to 5'-direction to yield nucleoside 5'-phosphates.. Functionally, bidirectionally degrades single-stranded DNA into large acid-insoluble oligonucleotides, which are then degraded further into small acid-soluble oligonucleotides. The protein is Exodeoxyribonuclease 7 small subunit of Chlorobaculum tepidum (strain ATCC 49652 / DSM 12025 / NBRC 103806 / TLS) (Chlorobium tepidum).